The primary structure comprises 406 residues: Mitochondrial potassium channel (406 aa).

The N-terminal 35 residues, 1–35 (MTGCSPVFAMQHVVGVPRILVRRTFLGTDVTMTRT), are a transit peptide targeting the mitochondrion. Over 36–198 (LCSPGPREKR…KERTRAERTK (163 aa)) the chain is Mitochondrial matrix. A coiled-coil region spans residues 113–140 (VREAREGLEAQQTKLKEVRDRLDRVSRE). A helical membrane pass occupies residues 199-219 (NWSLIGSVLGALIGVAGSTYV). Topologically, residues 220-382 (NRVRLQELKA…LEAQANRNTV (163 aa)) are mitochondrial intermembrane. Residues 383–403 (SSTLVTCVTFLATLPLLYMLF) form a helical membrane-spanning segment. Topologically, residues 404-406 (KTS) are mitochondrial matrix.

As to quaternary structure, the mitochondrial potassium channel (mitoK(ATP)) is composed of 4 subunits of CCDC51/MITOK and 4 subunits of ABCB8/MITOSUR.

It is found in the mitochondrion inner membrane. The enzyme catalyses K(+)(in) = K(+)(out). Inhibited by ATP via mitoK(ATP) channel. In terms of biological role, pore-forming subunit of the mitochondrial ATP-gated potassium channel (mitoK(ATP)). Together with ATP-binding subunit ABCB8/MITOSUR of the mitoK(ATP) channel, mediates ATP-dependent K(+) currents across the mitochondrial inner membrane. An increase in ATP intracellular levels closes the channel, inhibiting K(+) transport, whereas a decrease in ATP levels enhances K(+) uptake in the mitochondrial matrix. May contribute to the homeostatic control of cellular metabolism under stress conditions by regulating the mitochondrial matrix volume. This is Mitochondrial potassium channel from Mus musculus (Mouse).